The chain runs to 100 residues: Putative exopolysaccharide production repressor protein y4xQ (100 aa).

A run of 2 helical transmembrane segments spans residues 9-29 (ILWL…GSIS) and 35-55 (TMVG…FLLW). The interval 66–100 (TTGQFHGEEQPGDPRIAGTHGRTDGDPCFEDEDSR) is disordered.

The protein to Rhizobium exopolysaccharide production repressor protein (ExoX).

It localises to the cell membrane. Functionally, could be involved in the inhibition of exopolysaccharide synthesis (EPS) and nodulation ability (nod). The sequence is that of Putative exopolysaccharide production repressor protein y4xQ from Sinorhizobium fredii (strain NBRC 101917 / NGR234).